We begin with the raw amino-acid sequence, 451 residues long: Glutamyl-tRNA reductase (451 aa).

Residues 47 to 50, Ser132, 137 to 139, and Gln143 each bind substrate; these read TCNR and EPQ. The Nucleophile role is filled by Cys48. 212–217 serves as a coordination point for NADP(+); that stretch reads AAGEMN.

It belongs to the glutamyl-tRNA reductase family. As to quaternary structure, homodimer.

The catalysed reaction is (S)-4-amino-5-oxopentanoate + tRNA(Glu) + NADP(+) = L-glutamyl-tRNA(Glu) + NADPH + H(+). The protein operates within porphyrin-containing compound metabolism; protoporphyrin-IX biosynthesis; 5-aminolevulinate from L-glutamyl-tRNA(Glu): step 1/2. Catalyzes the NADPH-dependent reduction of glutamyl-tRNA(Glu) to glutamate 1-semialdehyde (GSA). The sequence is that of Glutamyl-tRNA reductase from Psychrobacter sp. (strain PRwf-1).